A 114-amino-acid chain; its full sequence is Large ribosomal subunit protein bL19 (114 aa).

It belongs to the bacterial ribosomal protein bL19 family.

This protein is located at the 30S-50S ribosomal subunit interface and may play a role in the structure and function of the aminoacyl-tRNA binding site. The polypeptide is Large ribosomal subunit protein bL19 (Acidithiobacillus ferrooxidans (strain ATCC 23270 / DSM 14882 / CIP 104768 / NCIMB 8455) (Ferrobacillus ferrooxidans (strain ATCC 23270))).